A 240-amino-acid chain; its full sequence is 4-hydroxy-tetrahydrodipicolinate reductase (240 aa).

NAD(+)-binding positions include 79-81 (ATT) and 103-106 (SANM). H135 serves as the catalytic Proton donor/acceptor. Residue H136 participates in (S)-2,3,4,5-tetrahydrodipicolinate binding. K139 functions as the Proton donor in the catalytic mechanism. Residue 145 to 146 (GT) participates in (S)-2,3,4,5-tetrahydrodipicolinate binding.

It belongs to the DapB family.

It is found in the cytoplasm. It carries out the reaction (S)-2,3,4,5-tetrahydrodipicolinate + NAD(+) + H2O = (2S,4S)-4-hydroxy-2,3,4,5-tetrahydrodipicolinate + NADH + H(+). The catalysed reaction is (S)-2,3,4,5-tetrahydrodipicolinate + NADP(+) + H2O = (2S,4S)-4-hydroxy-2,3,4,5-tetrahydrodipicolinate + NADPH + H(+). It functions in the pathway amino-acid biosynthesis; L-lysine biosynthesis via DAP pathway; (S)-tetrahydrodipicolinate from L-aspartate: step 4/4. Functionally, catalyzes the conversion of 4-hydroxy-tetrahydrodipicolinate (HTPA) to tetrahydrodipicolinate. This is 4-hydroxy-tetrahydrodipicolinate reductase from Staphylococcus aureus (strain JH1).